The chain runs to 104 residues: Protamine-2 (104 aa).

Residues 1–91 (MVRYRMRSPS…RRGCRRSRRR (91 aa)) are disordered. Phosphoserine occurs at positions 8, 10, and 33. Positions 33-44 (SPERVEDYGRTE) are enriched in basic and acidic residues. Over residues 45 to 91 (RGHHHRHRRCKRLHRIHKRRRSCRRRRRHSCRHRRRHRRGCRRSRRR) the composition is skewed to basic residues.

It belongs to the protamine P2 family. As to quaternary structure, interacts with TDRP. Proteolytic processing into mature chains is required for histone eviction during spermatogenesis. Transition proteins (TNP1 and TNP2) are required for processing. In terms of tissue distribution, testis.

The protein localises to the nucleus. The protein resides in the chromosome. Functionally, protamines substitute for histones in the chromatin of sperm during the haploid phase of spermatogenesis. They compact sperm DNA into a highly condensed, stable and inactive complex. The polypeptide is Protamine-2 (Prm2) (Rattus norvegicus (Rat)).